The sequence spans 89 residues: Small ribosomal subunit protein uS15 (89 aa).

This sequence belongs to the universal ribosomal protein uS15 family. In terms of assembly, part of the 30S ribosomal subunit. Forms a bridge to the 50S subunit in the 70S ribosome, contacting the 23S rRNA.

Its function is as follows. One of the primary rRNA binding proteins, it binds directly to 16S rRNA where it helps nucleate assembly of the platform of the 30S subunit by binding and bridging several RNA helices of the 16S rRNA. Forms an intersubunit bridge (bridge B4) with the 23S rRNA of the 50S subunit in the ribosome. The chain is Small ribosomal subunit protein uS15 from Levilactobacillus brevis (strain ATCC 367 / BCRC 12310 / CIP 105137 / JCM 1170 / LMG 11437 / NCIMB 947 / NCTC 947) (Lactobacillus brevis).